We begin with the raw amino-acid sequence, 191 residues long: Salivary lipocalin (191 aa).

The signal sequence occupies residues 1–16; sequence MKLLLLLCLGLTLASS. N-linked (GlcNAc...) asparagine glycosylation occurs at Asn-69. Cys-84 and Cys-176 are disulfide-bonded.

This sequence belongs to the calycin superfamily. Lipocalin family. In terms of assembly, homodimer. In terms of tissue distribution, in the submaxillary salivary glands of mature male pigs, but absent from that of females. Expression was much lower in submaxillary glands of castrated male pigs than in sexually mature individuals.

It localises to the secreted. Binds pheromones, the pheromones are released from the saliva of males and affect the sexual behavior of females. This is Salivary lipocalin (SAL1) from Sus scrofa (Pig).